The following is a 157-amino-acid chain: Endoribonuclease YbeY (157 aa).

Residues histidine 113, histidine 117, and histidine 123 each contribute to the Zn(2+) site.

This sequence belongs to the endoribonuclease YbeY family. Zn(2+) is required as a cofactor.

The protein localises to the cytoplasm. Functionally, single strand-specific metallo-endoribonuclease involved in late-stage 70S ribosome quality control and in maturation of the 3' terminus of the 16S rRNA. The chain is Endoribonuclease YbeY from Ehrlichia ruminantium (strain Welgevonden).